Here is a 194-residue protein sequence, read N- to C-terminus: Crossover junction endodeoxyribonuclease RuvC (194 aa).

Residues Asp-7, Glu-68, and Asp-141 contribute to the active site. 3 residues coordinate Mg(2+): Asp-7, Glu-68, and Asp-141.

This sequence belongs to the RuvC family. Homodimer which binds Holliday junction (HJ) DNA. The HJ becomes 2-fold symmetrical on binding to RuvC with unstacked arms; it has a different conformation from HJ DNA in complex with RuvA. In the full resolvosome a probable DNA-RuvA(4)-RuvB(12)-RuvC(2) complex forms which resolves the HJ. Mg(2+) is required as a cofactor.

Its subcellular location is the cytoplasm. The enzyme catalyses Endonucleolytic cleavage at a junction such as a reciprocal single-stranded crossover between two homologous DNA duplexes (Holliday junction).. Functionally, the RuvA-RuvB-RuvC complex processes Holliday junction (HJ) DNA during genetic recombination and DNA repair. Endonuclease that resolves HJ intermediates. Cleaves cruciform DNA by making single-stranded nicks across the HJ at symmetrical positions within the homologous arms, yielding a 5'-phosphate and a 3'-hydroxyl group; requires a central core of homology in the junction. The consensus cleavage sequence is 5'-(A/T)TT(C/G)-3'. Cleavage occurs on the 3'-side of the TT dinucleotide at the point of strand exchange. HJ branch migration catalyzed by RuvA-RuvB allows RuvC to scan DNA until it finds its consensus sequence, where it cleaves and resolves the cruciform DNA. The polypeptide is Crossover junction endodeoxyribonuclease RuvC (Bifidobacterium longum (strain DJO10A)).